A 206-amino-acid chain; its full sequence is Large ribosomal subunit protein uL4 (206 aa).

The protein belongs to the universal ribosomal protein uL4 family. As to quaternary structure, part of the 50S ribosomal subunit.

Its function is as follows. One of the primary rRNA binding proteins, this protein initially binds near the 5'-end of the 23S rRNA. It is important during the early stages of 50S assembly. It makes multiple contacts with different domains of the 23S rRNA in the assembled 50S subunit and ribosome. Forms part of the polypeptide exit tunnel. The polypeptide is Large ribosomal subunit protein uL4 (Nitrobacter hamburgensis (strain DSM 10229 / NCIMB 13809 / X14)).